We begin with the raw amino-acid sequence, 929 residues long: Diacylglycerol kinase zeta (929 aa).

Positions 1–14 are enriched in basic and acidic residues; the sequence is MEPRDPSPEARSSD. Disordered stretches follow at residues 1–46 and 59–80; these read MEPR…RRFP and KSGLQHLAPPPPTPGAPCGESE. Residues 15–24 show a composition bias toward low complexity; it reads SESASASSSG. Positions 25 to 37 are enriched in basic and acidic residues; the sequence is SERDADPEPDKAP. Phorbol-ester/DAG-type zinc fingers lie at residues 98–153 and 173–231; these read HIWF…NFRC and HHWV…EEPC. The disordered stretch occupies residues 257–281; it reads KASKKKKRASFKRRSSKKGPEEGRW. Residues 258–273 are compositionally biased toward basic residues; sequence ASKKKKRASFKRRSSK. Residues 279–417 form a mediates interaction with RASGRP1 region; it reads GRWRPFIIRP…HVEEGNVVQL (139 aa). A DAGKc domain is found at 292-426; sequence PLMKPLLVFV…LDRWDLRAEP (135 aa). The short motif at 362–370 is the Nuclear export signal element; sequence LSTLDQLRL. The disordered stretch occupies residues 421–441; sequence DLRAEPNPEAGPEERDDGATD. Residue serine 706 is modified to Phosphoserine. A disordered region spans residues 760 to 783; sequence ARPDLPTPTSPLPASPCSPTPGSL. Positions 764–778 are enriched in pro residues; sequence LPTPTSPLPASPCSP. The residue at position 782 (serine 782) is a Phosphoserine. ANK repeat units follow at residues 823 to 853 and 858 to 887; these read QSRTLLHHAVSTGSKEVVRYLLDHAPPEILD and NGETCLHQAAALGQRTICHYIVEAGASLMK. Residues 925 to 929 carry the PDZ-binding motif; the sequence is QETAV.

Belongs to the eukaryotic diacylglycerol kinase family. In terms of assembly, interacts (via PDZ-binding motif) with the PDZ domain of the syntrophin SNTG1 and that of SNX27. Interacts with IRS1 in the absence of insulin; insulin stimulation decreases this interaction. Found in a ternary complex with IRS1 and PIP5K1A in the absence of insulin. Interacts with PIP5K1A. Forms a signaling complex with RASGRP1 and HRAS.

Its subcellular location is the nucleus. It localises to the cytoplasm. The protein localises to the cytosol. It is found in the cell membrane. The protein resides in the cell projection. Its subcellular location is the lamellipodium. It catalyses the reaction a 1,2-diacyl-sn-glycerol + ATP = a 1,2-diacyl-sn-glycero-3-phosphate + ADP + H(+). The enzyme catalyses a 1-O-alkyl-sn-glycerol + ATP = a 1-O-alkyl-sn-glycero-3-phosphate + ADP + H(+). It carries out the reaction 1-O-alkyl-2-acyl-sn-glycerol + ATP = 1-O-alkyl-2-acyl-sn-glycero-3-phosphate + ADP + H(+). The catalysed reaction is 1,2-didecanoyl-sn-glycerol + ATP = 1,2-didecanoyl-sn-glycero-3-phosphate + ADP + H(+). It catalyses the reaction 1,2-ditetradecanoyl-sn-glycerol + ATP = 1,2-ditetradecanoyl-sn-glycero-3-phosphate + ADP + H(+). The enzyme catalyses 1-hexadecanoyl-2-(9Z-octadecenoyl)-sn-glycerol + ATP = 1-hexadecanoyl-2-(9Z-octadecenoyl)-sn-glycero-3-phosphate + ADP + H(+). It carries out the reaction 1-hexadecanoyl-2-(5Z,8Z,11Z,14Z-eicosatetraenoyl)-sn-glycerol + ATP = 1-hexadecanoyl-2-(5Z,8Z,11Z,14Z-eicosatetraenoyl)-sn-glycero-3-phosphate + ADP + H(+). The catalysed reaction is 1-octadecanoyl-2-(9Z-octadecenoyl)-sn-glycerol + ATP = 1-octadecanoyl-2-(9Z-octadecenoyl)-sn-glycero-3-phosphate + ADP + H(+). It catalyses the reaction 1-octadecanoyl-2-(5Z,8Z,11Z,14Z-eicosatetraenoyl)-sn-glycerol + ATP = 1-octadecanoyl-2-(5Z,8Z,11Z,14Z-eicosatetraenoyl)-sn-glycero-3-phosphate + ADP + H(+). The enzyme catalyses 1-octadecanoyl-2-(4Z,7Z,10Z,13Z,16Z,19Z-docosahexaenoyl)-sn-glycerol + ATP = 1-octadecanoyl-2-(4Z,7Z,10Z,13Z,16Z,19Z-docosahexaenoyl)-sn-glycero-3-phosphate + ADP + H(+). It carries out the reaction 1,2-di-(9Z-octadecenoyl)-sn-glycerol + ATP = 1,2-di-(9Z-octadecenoyl)-sn-glycero-3-phosphate + ADP + H(+). The catalysed reaction is 1-(9Z-octadecenoyl)-2-hexadecanoyl-sn-glycerol + ATP = 1-(9Z)-octadecenoyl-2-hexadecanoyl-sn-glycero-3-phosphate + ADP + H(+). It catalyses the reaction 1-eicosanoyl-2-(5Z,8Z,11Z,14Z)-eicosatetraenoyl-sn-glycerol + ATP = 1-eicosanoyl-2-(5Z,8Z,11Z,14Z)-eicosatetraenoyl-sn-glycero-3-phosphate + ADP + H(+). The enzyme catalyses 1,2-di-(5Z,8Z,11Z,14Z)-eicosatetraenoyl-sn-glycerol + ATP = 1,2-di-(5Z,8Z,11Z,14Z)-eicosatetraenoyl-sn-glycero-3-phosphate + ADP + H(+). It carries out the reaction 1-O-hexadecyl-2-acetyl-sn-glycerol + ATP = 1-O-hexadecyl-2-acetyl-sn-glycero-3-phosphate + ADP + H(+). The catalysed reaction is 1-O-hexadecyl-2-(5Z,8Z,11Z,14Z-eicosatetraenoyl)-sn-glycerol + ATP = 1-O-hexadecyl-2-(5Z,8Z,11Z,14Z-eicosatetraenoyl)-sn-glycero-3-phosphate + ADP + H(+). It catalyses the reaction 1-O-hexadecyl-2-(9Z-octadecenoyl)-sn-glycerol + ATP = 1-O-hexadecyl-2-(9Z-octadecenoyl)-sn-glycero-3-phosphate + ADP + H(+). The enzyme catalyses 1-O-hexadecyl-sn-glycerol + ATP = 1-O-hexadecyl-sn-glycero-3-phosphate + ADP + H(+). Its pathway is lipid metabolism; glycerolipid metabolism. In terms of biological role, diacylglycerol kinase that converts diacylglycerol/DAG into phosphatidic acid/phosphatidate/PA and regulates the respective levels of these two bioactive lipids. Thereby, acts as a central switch between the signaling pathways activated by these second messengers with different cellular targets and opposite effects in numerous biological processes. Also plays an important role in the biosynthesis of complex lipids. Does not exhibit an acyl chain-dependent substrate specificity among diacylglycerol species. Can also phosphorylate 1-alkyl-2-acylglycerol in vitro but less efficiently and with a preference for alkylacylglycerols containing an arachidonoyl group. The biological processes it is involved in include T cell activation since it negatively regulates T-cell receptor signaling which is in part mediated by diacylglycerol. By generating phosphatidic acid, stimulates PIP5KIA activity which regulates actin polymerization. Through the same mechanism could also positively regulate insulin-induced translocation of SLC2A4 to the cell membrane. Regulates RASGRP1 activity. The chain is Diacylglycerol kinase zeta from Rattus norvegicus (Rat).